We begin with the raw amino-acid sequence, 485 residues long: Outer membrane protein OprM (485 aa).

Positions Met-1–Gly-17 are cleaved as a signal peptide. Residue Cys-18 is the site of N-palmitoyl cysteine attachment. The S-diacylglycerol cysteine moiety is linked to residue Cys-18.

This sequence belongs to the outer membrane factor (OMF) (TC 1.B.17) family. As to quaternary structure, component of the MexAB-OprM multidrug efflux complex, composed of six MexA subunits forming a hexameric tube, binding to a MexB trimer, which interact with the trimeric OprM outer membrane channel protein. The OprM homotrimer forms a 135 Angstroms-long pore. It consists of a beta-barrel, which is probably inserted in the outer membrane, and an alpha-barrel formed by alpha-helices which probably spans the periplasm. In the ground state the periplasmic end is closed, while the outer membrane end opening is 6-8 Angstroms in diameter. OprM does not directly contact MexB; instead, MexA joins MexB and OprM by forming a funnel-like hexamer anchored to the inner membrane. MexA may initially form a hexameric ring complex with MexB prior to OprM, then OprM undergoes a conformational change as it contacts MexA, allowing the periplasmic gate to open. It is thought that, under high intracellular substrate concentration, MexB ejects substrate into the tunnel formed by MexA-OprM; as the substrate level declines, conformational changes in MexB cause efflux to reduce and stop and the complex shifts to the closed state. MexB subunit acts as a substrate:proton antiporter and activity is enhanced significantly when in complex with MexA and OprM, in vitro.

It localises to the cell outer membrane. With respect to regulation, export of antibiotics and solvents is dramatically decreased in the presence of the protonophore carbonyl cyanide m-chlorophenylhydrazone (CCCP), therefore may be driven by a proton gradient. Antibiotic efflux is inhibited by pyridopyrimidine derivatives, such as ABI-PP, acting by binding to a hydrophobic pocket in MexB. Its function is as follows. The outer membrane component of the MexAB-OprM efflux system that confers multidrug resistance. Functions as the major efflux pump for n-hexane and p-xylene efflux. Has been shown in one study to be involved in the active efflux of the autoinducer N-(3-oxododecanoyl) homoserine lactone, thereby playing an indirect role in quorum-sensing; but has been shown in another study not to be involved in efflux of this autoinducer. Over-expression of the pump increases antibiotic and solvent efflux capacities. Can replace the OprJ outer membrane component of the MexCD-OprJ pump; the antibiotics exported are those exported by the intact MexCD pump, showing that efflux substrate specificity is not conferred by this component. Serves as the outer membrane component for the MexXY efflux system. Implicated in the secretion of the siderophore pyoverdine. OprM is probably involved in the efflux of the siderophore across the outer membrane. The protein is Outer membrane protein OprM (oprM) of Pseudomonas aeruginosa (strain ATCC 15692 / DSM 22644 / CIP 104116 / JCM 14847 / LMG 12228 / 1C / PRS 101 / PAO1).